The primary structure comprises 498 residues: DEAD-box ATP-dependent RNA helicase 12 (498 aa).

The tract at residues 1–114 is disordered; it reads MNTNRGRYPP…RLPPPDTRYQ (114 aa). Residues 27-65 show a composition bias toward low complexity; that stretch reads SYRQQQPPQDQQYVQRGYSQNPQQMQLQQQHQQQQQQQQ. A compositionally biased stretch (polar residues) spans 74 to 96; it reads GNASNANEVVQQTTQPEASSDAN. A Q motif motif is present at residues 124-152; that stretch reads NEFEDYFLKRDLLKGIYEKGFEKPSPIQE. Residues 155 to 325 form the Helicase ATP-binding domain; that stretch reads IPIALTGSDI…DRHLRKPYVI (171 aa). An ATP-binding site is contributed by 168-175; sequence AKNGTGKT. Residue Thr-230 is modified to Phosphothreonine. The DEAD box motif lies at 273–276; sequence DEAD. Residues 335-495 enclose the Helicase C-terminal domain; it reads GVTQYYAFVE…PIPSNIDQAI (161 aa).

The protein belongs to the DEAD box helicase family. DDX6/DHH1 subfamily.

The protein resides in the cytoplasm. It is found in the P-body. The catalysed reaction is ATP + H2O = ADP + phosphate + H(+). Its function is as follows. ATP-dependent RNA helicase involved in mRNA turnover, and more specifically in mRNA decapping. The protein is DEAD-box ATP-dependent RNA helicase 12 (RH12) of Arabidopsis thaliana (Mouse-ear cress).